The primary structure comprises 403 residues: Argininosuccinate synthase (403 aa).

Residues 10–18 (AYSGGVDTS) and alanine 38 each bind ATP. Tyrosine 89 serves as a coordination point for L-citrulline. Glycine 119 serves as a coordination point for ATP. Residues threonine 121, asparagine 125, and aspartate 126 each coordinate L-aspartate. Residue asparagine 125 coordinates L-citrulline. L-citrulline is bound by residues arginine 129, serine 177, serine 186, glutamate 262, and tyrosine 274.

This sequence belongs to the argininosuccinate synthase family. Type 1 subfamily. Homotetramer.

Its subcellular location is the cytoplasm. It catalyses the reaction L-citrulline + L-aspartate + ATP = 2-(N(omega)-L-arginino)succinate + AMP + diphosphate + H(+). It functions in the pathway amino-acid biosynthesis; L-arginine biosynthesis; L-arginine from L-ornithine and carbamoyl phosphate: step 2/3. The sequence is that of Argininosuccinate synthase from Synechococcus sp. (strain CC9605).